A 179-amino-acid polypeptide reads, in one-letter code: Large ribosomal subunit protein uL6 (179 aa).

The protein belongs to the universal ribosomal protein uL6 family. As to quaternary structure, part of the 50S ribosomal subunit.

Its function is as follows. This protein binds to the 23S rRNA, and is important in its secondary structure. It is located near the subunit interface in the base of the L7/L12 stalk, and near the tRNA binding site of the peptidyltransferase center. This is Large ribosomal subunit protein uL6 from Nocardioides sp. (strain ATCC BAA-499 / JS614).